The primary structure comprises 385 residues: Protein pelota homolog (385 aa).

Lys-162 is covalently cross-linked (Glycyl lysine isopeptide (Lys-Gly) (interchain with G-Cter in SUMO2)). Residues Ser-374, Ser-380, Ser-381, and Ser-382 each carry the phosphoserine modification.

The protein belongs to the eukaryotic release factor 1 family. Pelota subfamily. As to quaternary structure, component of the Pelota-HBS1L complex, also named Dom34-Hbs1 complex, composed of PELO and HBS1L. Interacts with PINK1. Interacts with ABCE1. Interacts with CNOT4. Requires a divalent metal cation as cofactor.

It is found in the cytoplasm. Its function is as follows. Component of the Pelota-HBS1L complex, a complex that recognizes stalled ribosomes and triggers the No-Go Decay (NGD) pathway. In the Pelota-HBS1L complex, PELO recognizes ribosomes stalled at the 3' end of an mRNA and engages stalled ribosomes by destabilizing mRNA in the mRNA channel. Following mRNA extraction from stalled ribosomes by the SKI complex, the Pelota-HBS1L complex promotes recruitment of ABCE1, which drives the disassembly of stalled ribosomes, followed by degradation of damaged mRNAs as part of the NGD pathway. As part of the PINK1-regulated signaling, upon mitochondrial damage is recruited to the ribosome/mRNA-ribonucleoprotein complex associated to mitochondrial outer membrane thereby enabling the recruitment of autophagy receptors and induction of mitophagy. The chain is Protein pelota homolog (PELO) from Pongo abelii (Sumatran orangutan).